Consider the following 572-residue polypeptide: Probable D-xylulose kinase A (572 aa).

Positions 95, 166, 282, and 283 each coordinate substrate. Residues W365, 470 to 471 (GG), and N474 each bind ATP.

Belongs to the FGGY kinase family.

It localises to the cytoplasm. It catalyses the reaction D-xylulose + ATP = D-xylulose 5-phosphate + ADP + H(+). Its function is as follows. Highly specific D-xylulose kinase which participates in the catabolism of xylose. Xylose is a major component of hemicelluloses such as xylan. Most fungi utilize D-xylose via three enzymatic reactions, xylose reductase (XR), xylitol dehydrogenase (XDH), and xylulokinase, to form xylulose 5-phosphate, which enters pentose phosphate pathway. This chain is Probable D-xylulose kinase A (xkiA), found in Aspergillus oryzae (strain ATCC 42149 / RIB 40) (Yellow koji mold).